A 602-amino-acid polypeptide reads, in one-letter code: Elongation factor 4 (602 aa).

One can recognise a tr-type G domain in the interval 7 to 189 (SKIRNFCIIA…AVVSRIPHPQ (183 aa)). Residues 19–24 (DHGKST) and 136–139 (NKVD) each bind GTP.

Belongs to the TRAFAC class translation factor GTPase superfamily. Classic translation factor GTPase family. LepA subfamily.

The protein resides in the cell inner membrane. The enzyme catalyses GTP + H2O = GDP + phosphate + H(+). In terms of biological role, required for accurate and efficient protein synthesis under certain stress conditions. May act as a fidelity factor of the translation reaction, by catalyzing a one-codon backward translocation of tRNAs on improperly translocated ribosomes. Back-translocation proceeds from a post-translocation (POST) complex to a pre-translocation (PRE) complex, thus giving elongation factor G a second chance to translocate the tRNAs correctly. Binds to ribosomes in a GTP-dependent manner. The protein is Elongation factor 4 of Prochlorococcus marinus subsp. pastoris (strain CCMP1986 / NIES-2087 / MED4).